Consider the following 126-residue polypeptide: NADH-quinone oxidoreductase subunit A (126 aa).

3 consecutive transmembrane segments (helical) span residues I16–I36, I73–G93, and M95–A115.

It belongs to the complex I subunit 3 family. In terms of assembly, NDH-1 is composed of 14 different subunits. Subunits NuoA, H, J, K, L, M, N constitute the membrane sector of the complex.

The protein resides in the cell inner membrane. It catalyses the reaction a quinone + NADH + 5 H(+)(in) = a quinol + NAD(+) + 4 H(+)(out). In terms of biological role, NDH-1 shuttles electrons from NADH, via FMN and iron-sulfur (Fe-S) centers, to quinones in the respiratory chain. The immediate electron acceptor for the enzyme in this species is believed to be ubiquinone. Couples the redox reaction to proton translocation (for every two electrons transferred, four hydrogen ions are translocated across the cytoplasmic membrane), and thus conserves the redox energy in a proton gradient. This chain is NADH-quinone oxidoreductase subunit A, found in Rhodobacter capsulatus (Rhodopseudomonas capsulata).